A 124-amino-acid polypeptide reads, in one-letter code: Large ribosomal subunit protein uL18 (124 aa).

Belongs to the universal ribosomal protein uL18 family. As to quaternary structure, part of the 50S ribosomal subunit; part of the 5S rRNA/L5/L18/L25 subcomplex. Contacts the 5S and 23S rRNAs.

In terms of biological role, this is one of the proteins that bind and probably mediate the attachment of the 5S RNA into the large ribosomal subunit, where it forms part of the central protuberance. This Orientia tsutsugamushi (strain Boryong) (Rickettsia tsutsugamushi) protein is Large ribosomal subunit protein uL18.